The sequence spans 342 residues: Dihydroorotase (342 aa).

2 residues coordinate Zn(2+): His13 and His15. Substrate contacts are provided by residues His15–Arg17 and Asn41. Residues Lys98, His135, and His173 each coordinate Zn(2+). Position 98 is an N6-carboxylysine (Lys98). His135 provides a ligand contact to substrate. Leu218 lines the substrate pocket. Zn(2+) is bound at residue Asp246. Asp246 is an active-site residue. Substrate contacts are provided by His250 and Ala262.

It belongs to the metallo-dependent hydrolases superfamily. DHOase family. Class II DHOase subfamily. Homodimer. It depends on Zn(2+) as a cofactor.

It carries out the reaction (S)-dihydroorotate + H2O = N-carbamoyl-L-aspartate + H(+). The protein operates within pyrimidine metabolism; UMP biosynthesis via de novo pathway; (S)-dihydroorotate from bicarbonate: step 3/3. In terms of biological role, catalyzes the reversible cyclization of carbamoyl aspartate to dihydroorotate. This is Dihydroorotase from Aliivibrio salmonicida (strain LFI1238) (Vibrio salmonicida (strain LFI1238)).